The following is a 241-amino-acid chain: DNA repair protein RecO (241 aa).

It belongs to the RecO family.

Involved in DNA repair and RecF pathway recombination. In Xanthomonas campestris pv. campestris (strain B100), this protein is DNA repair protein RecO.